The chain runs to 173 residues: Large ribosomal subunit protein uL29c (173 aa).

The N-terminal 60 residues, 1 to 60 (MLSLSIATPGTAAIFRRGTASATSTSSSFHGVRIQHQVSARVPAAATISSSSPKPSVVMM), are a transit peptide targeting the chloroplast. The disordered stretch occupies residues 143–173 (KKSIVPRPPPSLKKLQEEEAAEEAAEAAKSA). The residue at position 172 (Ser172) is a Phosphoserine.

The protein belongs to the universal ribosomal protein uL29 family. As to quaternary structure, part of the 50S ribosomal subunit.

The protein localises to the plastid. Its subcellular location is the chloroplast. This chain is Large ribosomal subunit protein uL29c (RPL29), found in Arabidopsis thaliana (Mouse-ear cress).